We begin with the raw amino-acid sequence, 352 residues long: Histidine biosynthesis bifunctional protein HisB (352 aa).

The segment at 1–163 (MKKILFIDRD…MVASAIINDA (163 aa)) is histidinol-phosphatase. Catalysis depends on aspartate 8, which acts as the Nucleophile. The Mg(2+) site is built by aspartate 8 and aspartate 10. Catalysis depends on aspartate 10, which acts as the Proton donor. 4 residues coordinate Zn(2+): cysteine 91, histidine 93, cysteine 99, and cysteine 101. A Mg(2+)-binding site is contributed by aspartate 128. Residues 164–352 (RKASVQRKTK…NYLPSTKGVL (189 aa)) form an imidazoleglycerol-phosphate dehydratase region.

This sequence in the N-terminal section; belongs to the histidinol-phosphatase family. In the C-terminal section; belongs to the imidazoleglycerol-phosphate dehydratase family. Requires Mg(2+) as cofactor. Zn(2+) serves as cofactor.

Its subcellular location is the cytoplasm. The catalysed reaction is D-erythro-1-(imidazol-4-yl)glycerol 3-phosphate = 3-(imidazol-4-yl)-2-oxopropyl phosphate + H2O. The enzyme catalyses L-histidinol phosphate + H2O = L-histidinol + phosphate. It participates in amino-acid biosynthesis; L-histidine biosynthesis; L-histidine from 5-phospho-alpha-D-ribose 1-diphosphate: step 6/9. Its pathway is amino-acid biosynthesis; L-histidine biosynthesis; L-histidine from 5-phospho-alpha-D-ribose 1-diphosphate: step 8/9. In Legionella pneumophila (strain Lens), this protein is Histidine biosynthesis bifunctional protein HisB.